We begin with the raw amino-acid sequence, 91 residues long: MPKSKITTEGSALPQSSSSATNRTPVKINSEGTPKWYIAIMLGLMLLGLLWLVVNYLAGESIPFMQELGPWNYGIGFGLAIIGLLMTMGWR.

Over residues M1–T24 the composition is skewed to polar residues. Residues M1–I28 are disordered. A run of 2 helical transmembrane segments spans residues I38 to A58 and L68 to M88.

This sequence belongs to the CrgA family.

It localises to the cell membrane. Involved in cell division. The sequence is that of Cell division protein CrgA from Corynebacterium aurimucosum (strain ATCC 700975 / DSM 44827 / CIP 107346 / CN-1) (Corynebacterium nigricans).